A 465-amino-acid chain; its full sequence is Asparagine--tRNA ligase (465 aa).

It belongs to the class-II aminoacyl-tRNA synthetase family. As to quaternary structure, homodimer.

It localises to the cytoplasm. The enzyme catalyses tRNA(Asn) + L-asparagine + ATP = L-asparaginyl-tRNA(Asn) + AMP + diphosphate + H(+). The chain is Asparagine--tRNA ligase from Hahella chejuensis (strain KCTC 2396).